Reading from the N-terminus, the 156-residue chain is Ribosomal RNA large subunit methyltransferase H (156 aa).

Residues Leu73, Gly104, and 123–128 (LSAMTL) contribute to the S-adenosyl-L-methionine site.

It belongs to the RNA methyltransferase RlmH family. In terms of assembly, homodimer.

It localises to the cytoplasm. The enzyme catalyses pseudouridine(1915) in 23S rRNA + S-adenosyl-L-methionine = N(3)-methylpseudouridine(1915) in 23S rRNA + S-adenosyl-L-homocysteine + H(+). Specifically methylates the pseudouridine at position 1915 (m3Psi1915) in 23S rRNA. This Laribacter hongkongensis (strain HLHK9) protein is Ribosomal RNA large subunit methyltransferase H.